A 103-amino-acid chain; its full sequence is Large ribosomal subunit protein uL24 (103 aa).

It belongs to the universal ribosomal protein uL24 family. As to quaternary structure, part of the 50S ribosomal subunit.

Functionally, one of two assembly initiator proteins, it binds directly to the 5'-end of the 23S rRNA, where it nucleates assembly of the 50S subunit. Its function is as follows. One of the proteins that surrounds the polypeptide exit tunnel on the outside of the subunit. In Bacillus licheniformis (strain ATCC 14580 / DSM 13 / JCM 2505 / CCUG 7422 / NBRC 12200 / NCIMB 9375 / NCTC 10341 / NRRL NRS-1264 / Gibson 46), this protein is Large ribosomal subunit protein uL24.